Here is a 120-residue protein sequence, read N- to C-terminus: Large ribosomal subunit protein bL17 (120 aa).

Belongs to the bacterial ribosomal protein bL17 family. Part of the 50S ribosomal subunit. Contacts protein L32.

This Geobacillus sp. (strain WCH70) protein is Large ribosomal subunit protein bL17.